A 225-amino-acid chain; its full sequence is Transmembrane protein C16orf54 homolog (225 aa).

Residues 32-52 (PCIPIMLGLASLTAFFIITTA) form a helical membrane-spanning segment. 2 disordered regions span residues 106-163 (DRAP…ERPH) and 178-200 (EAGLQVGSPRPWRPRQGSLEPDW). A phosphothreonine mark is found at threonine 113 and threonine 117. Over residues 122-140 (ATAPPATSAPYSSLSSLVP) the composition is skewed to low complexity. Serine 195 is subject to Phosphoserine.

It localises to the membrane. In Mus musculus (Mouse), this protein is Transmembrane protein C16orf54 homolog.